A 104-amino-acid polypeptide reads, in one-letter code: MTQVAKNDHRLMQVLLAPVVSEKATLVAEKNEQVVFEVARDANKGEVKAAVELLFKVEVESVQILNQKGKQKRFGRFMGRRDHVKKAYVSLKPGQEINFEAEAK.

It belongs to the universal ribosomal protein uL23 family. As to quaternary structure, part of the 50S ribosomal subunit. Contacts protein L29, and trigger factor when it is bound to the ribosome.

Its function is as follows. One of the early assembly proteins it binds 23S rRNA. One of the proteins that surrounds the polypeptide exit tunnel on the outside of the ribosome. Forms the main docking site for trigger factor binding to the ribosome. This Ralstonia pickettii (strain 12J) protein is Large ribosomal subunit protein uL23.